Consider the following 224-residue polypeptide: 7-cyano-7-deazaguanine synthase (224 aa).

Residue 8-18 (VSGGADSATVL) participates in ATP binding. Zn(2+)-binding residues include Cys189, Cys199, Cys202, and Cys205.

It belongs to the QueC family. Zn(2+) serves as cofactor.

The enzyme catalyses 7-carboxy-7-deazaguanine + NH4(+) + ATP = 7-cyano-7-deazaguanine + ADP + phosphate + H2O + H(+). It participates in purine metabolism; 7-cyano-7-deazaguanine biosynthesis. In terms of biological role, catalyzes the ATP-dependent conversion of 7-carboxy-7-deazaguanine (CDG) to 7-cyano-7-deazaguanine (preQ(0)). The chain is 7-cyano-7-deazaguanine synthase from Rickettsia felis (strain ATCC VR-1525 / URRWXCal2) (Rickettsia azadi).